Consider the following 335-residue polypeptide: tRNA-dihydrouridine(20/20a) synthase (335 aa).

Residues 20–22 (PML) and Gln72 each bind FMN. Residue Cys102 is the Proton donor of the active site. FMN is bound by residues Lys141, His173, 213–215 (NGG), and 235–236 (GR).

This sequence belongs to the Dus family. DusA subfamily. The cofactor is FMN.

The enzyme catalyses 5,6-dihydrouridine(20) in tRNA + NADP(+) = uridine(20) in tRNA + NADPH + H(+). It carries out the reaction 5,6-dihydrouridine(20) in tRNA + NAD(+) = uridine(20) in tRNA + NADH + H(+). The catalysed reaction is 5,6-dihydrouridine(20a) in tRNA + NADP(+) = uridine(20a) in tRNA + NADPH + H(+). It catalyses the reaction 5,6-dihydrouridine(20a) in tRNA + NAD(+) = uridine(20a) in tRNA + NADH + H(+). Functionally, catalyzes the synthesis of 5,6-dihydrouridine (D), a modified base found in the D-loop of most tRNAs, via the reduction of the C5-C6 double bond in target uridines. Specifically modifies U20 and U20a in tRNAs. The sequence is that of tRNA-dihydrouridine(20/20a) synthase from Shewanella oneidensis (strain ATCC 700550 / JCM 31522 / CIP 106686 / LMG 19005 / NCIMB 14063 / MR-1).